Here is a 383-residue protein sequence, read N- to C-terminus: Geranylgeranyl pyrophosphate synthase esdpD (383 aa).

The isopentenyl diphosphate site is built by K88, R91, and H120. Mg(2+)-binding residues include D150 and D154. R159 is a binding site for dimethylallyl diphosphate. R160 contacts isopentenyl diphosphate. Dimethylallyl diphosphate-binding residues include K237, T238, and Q271. D274 serves as a coordination point for Mg(2+). Dimethylallyl diphosphate-binding residues include N278, K288, and K298.

This sequence belongs to the FPP/GGPP synthase family. The cofactor is Mg(2+).

It catalyses the reaction isopentenyl diphosphate + dimethylallyl diphosphate = (2E)-geranyl diphosphate + diphosphate. The enzyme catalyses isopentenyl diphosphate + (2E)-geranyl diphosphate = (2E,6E)-farnesyl diphosphate + diphosphate. The catalysed reaction is isopentenyl diphosphate + (2E,6E)-farnesyl diphosphate = (2E,6E,10E)-geranylgeranyl diphosphate + diphosphate. The protein operates within secondary metabolite biosynthesis; terpenoid biosynthesis. Geranylgeranyl pyrophosphate synthase; part of the cluster that mediates the biosynthesis of shearones, diterpenoid pyrones (DPs) which are structurally diverse meroterpenoids consisting of a diterpene linked by a pyrone, and which may exhibit a range of bioactivities. Within the pathway, esdpD takes part to the biosynthesis of the molecular scaffold by providing geranylgeranyl pyrophosphate (GGPP) to the prenyltransferase esdpC for C-3 geranylgeranylation of the alpha-pyrone. The molecular scaffold is commonly biosynthesized by a series of enzymes including the non-reducing polyketide synthase (NR-PKS) esdpA that generates an alpha-pyrone; the prenyltransferase esdpC that attaches a geranylgeranyl pyrophosphate (GGPP) produced by the GGPP synthase (GGPPS) esdpD onto the pyrone unit; the FAD-dependent monooxygenase esdpE that converts an olefin on the diterpene unit into an epoxide; and the terpene cyclase esdpB that catalyzes the cyclization reactions to give the molecular backbone shearone A. In the modification steps, esdpF oxidizes the hydroxy group to a ketone at C-3 and esdpG then attaches hydroxy groups at both C-11 and C-12. After that, esdpI hydroxylates at C-20 and esdpH hydroxylates at C-6'. The ether bridge is generated by nucleophilic attack of the hydroxy group at C-20 to the carbonyl carbon at C-3. EsdpH can also functions prior to esdpI. The different combinations of these modification enzymes lead to the production of diverse shearone derivatives, shearone I being the end product of the pathway. The alpha-ketoglutarate-dependent dioxygenase esdpJ seems not to be involved in this pathway. In Penicillium shearii (Eupenicillium shearii), this protein is Geranylgeranyl pyrophosphate synthase esdpD.